A 151-amino-acid polypeptide reads, in one-letter code: C-C motif chemokine 25 (151 aa).

Positions 1-23 (MRPWLLACLVACFVGAWAPAIHA) are cleaved as a signal peptide. Cystine bridges form between C30/C58 and C31/C75. The disordered stretch occupies residues 93 to 151 (RNKKDSKPHHSGRRFFQGPQSGVRKLSSGTSRPLLLKFSGPTRSSKRKASLLTTAIPGP).

It belongs to the intercrine beta (chemokine CC) family.

Its subcellular location is the secreted. Its function is as follows. Potentially involved in T-cell development. Recombinant protein shows chemotactic activity on thymocytes, macrophages, THP-1 cells, and dendritics cells but is inactive on peripheral blood lymphocytes and neutrophils. Binds to CCR9. Binds to atypical chemokine receptor ACKR4 and mediates the recruitment of beta-arrestin (ARRB1/2) to ACKR4. This is C-C motif chemokine 25 (CCL25) from Sus scrofa (Pig).